We begin with the raw amino-acid sequence, 297 residues long: Cyclin-dependent kinase 1 (297 aa).

The 284-residue stretch at 4-287 (FEKIEKIGEG…AKDILEHPYF (284 aa)) folds into the Protein kinase domain. Residues 10 to 18 (IGEGTYGVV) and Lys-33 contribute to the ATP site. Thr-14 bears the Phosphothreonine mark. Tyr-15 carries the phosphotyrosine modification. Asp-128 (proton acceptor) is an active-site residue. At Tyr-160 the chain carries Phosphotyrosine. A Phosphothreonine; by CAK modification is found at Thr-161.

The protein belongs to the protein kinase superfamily. CMGC Ser/Thr protein kinase family. CDC2/CDKX subfamily. In terms of assembly, forms a stable but non-covalent complex with a regulatory subunit and with a cyclin. Component of the Frs-CycA-Cdk1 complex composed of Cdk1, CycA and Z600.

Its subcellular location is the nucleus. It carries out the reaction L-seryl-[protein] + ATP = O-phospho-L-seryl-[protein] + ADP + H(+). It catalyses the reaction L-threonyl-[protein] + ATP = O-phospho-L-threonyl-[protein] + ADP + H(+). The catalysed reaction is [DNA-directed RNA polymerase] + ATP = phospho-[DNA-directed RNA polymerase] + ADP + H(+). Its activity is regulated as follows. Phosphorylation at Thr-14 or Tyr-15 inactivates the enzyme, while phosphorylation at Thr-161 activates it. Functionally, plays a key role in the control of the eukaryotic cell cycle. Required for entry into S-phase and mitosis. In embryos, promotes the release of Rif1 from chromatin during mid-blastula transition. p34 is a component of the kinase complex that phosphorylates the repetitive C-terminus of RNA polymerase II. This chain is Cyclin-dependent kinase 1, found in Drosophila melanogaster (Fruit fly).